A 29-amino-acid chain; its full sequence is Cyclotide psyleio C (29 aa).

Residues 1–29 (GDLPVCGETCFGGTCNTPGCVCAWPVCTR) constitute a cross-link (cyclopeptide (Gly-Arg)). 3 cysteine pairs are disulfide-bonded: C6–C20, C10–C22, and C15–C27.

In terms of processing, this is a cyclic peptide.

Its function is as follows. Probably participates in a plant defense mechanism. In Psychotria leiocarpa, this protein is Cyclotide psyleio C.